Here is a 140-residue protein sequence, read N- to C-terminus: Putative pre-16S rRNA nuclease (140 aa).

Belongs to the YqgF nuclease family.

It localises to the cytoplasm. Functionally, could be a nuclease involved in processing of the 5'-end of pre-16S rRNA. The protein is Putative pre-16S rRNA nuclease of Mycoplasma pneumoniae (strain ATCC 29342 / M129 / Subtype 1) (Mycoplasmoides pneumoniae).